A 358-amino-acid chain; its full sequence is Peptide chain release factor 1 (358 aa).

Gln233 carries the post-translational modification N5-methylglutamine.

It belongs to the prokaryotic/mitochondrial release factor family. Post-translationally, methylated by PrmC. Methylation increases the termination efficiency of RF1.

It is found in the cytoplasm. In terms of biological role, peptide chain release factor 1 directs the termination of translation in response to the peptide chain termination codons UAG and UAA. The sequence is that of Peptide chain release factor 1 from Listeria monocytogenes serotype 4b (strain CLIP80459).